A 129-amino-acid polypeptide reads, in one-letter code: Protein Turandot A1 (129 aa).

The first 21 residues, 1-21 (MNSSTALMCFALLLISPLCMG), serve as a signal peptide directing secretion. An N-linked (GlcNAc...) asparagine glycan is attached at Asn49.

This sequence belongs to the Turandot family.

It is found in the secreted. Functionally, a humoral factor that plays a role in stress tolerance; gives increased resistance to the lethal effects of bacterial challenge and stress. Regulated by the JAK/STAT pathway and NF-KB-like Relish pathway in the fat body, upd3 in the hemocytes and Mekk1 in response to septic injury and consequent immune response. The protein is Protein Turandot A1 (TotA1) of Drosophila simulans (Fruit fly).